The sequence spans 161 residues: Phosphopantetheine adenylyltransferase (161 aa).

T10 is a substrate binding site. ATP is bound by residues 10–11 and H18; that span reads TF. The substrate site is built by K42, L74, and R88. ATP contacts are provided by residues 89–91, E99, and 124–130; these read GIR and WRYLSST.

Belongs to the bacterial CoaD family. Homohexamer. Mg(2+) serves as cofactor.

The protein resides in the cytoplasm. It catalyses the reaction (R)-4'-phosphopantetheine + ATP + H(+) = 3'-dephospho-CoA + diphosphate. It functions in the pathway cofactor biosynthesis; coenzyme A biosynthesis; CoA from (R)-pantothenate: step 4/5. Functionally, reversibly transfers an adenylyl group from ATP to 4'-phosphopantetheine, yielding dephospho-CoA (dPCoA) and pyrophosphate. The sequence is that of Phosphopantetheine adenylyltransferase from Haemophilus ducreyi (strain 35000HP / ATCC 700724).